Here is a 201-residue protein sequence, read N- to C-terminus: Small ribosomal subunit protein uS4c (201 aa).

Residues 89–150 (MRLDNILFRL…KERSKALIQN (62 aa)) form the S4 RNA-binding domain.

Belongs to the universal ribosomal protein uS4 family. As to quaternary structure, part of the 30S ribosomal subunit. Contacts protein S5. The interaction surface between S4 and S5 is involved in control of translational fidelity.

The protein localises to the plastid. Its subcellular location is the chloroplast. One of the primary rRNA binding proteins, it binds directly to 16S rRNA where it nucleates assembly of the body of the 30S subunit. In terms of biological role, with S5 and S12 plays an important role in translational accuracy. In Phalaenopsis aphrodite subsp. formosana (Moth orchid), this protein is Small ribosomal subunit protein uS4c (rps4).